The primary structure comprises 83 residues: RNA-binding protein Hfq (83 aa).

Positions 10–69 (DPFLNALRREHVPVSIYLVNGIKLQGQIESFDQYVVLLRNTVTQMVYKHAISTIVPGRAV) constitute a Sm domain.

This sequence belongs to the Hfq family. As to quaternary structure, homohexamer.

In terms of biological role, RNA chaperone that binds small regulatory RNA (sRNAs) and mRNAs to facilitate mRNA translational regulation in response to envelope stress, environmental stress and changes in metabolite concentrations. Also binds with high specificity to tRNAs. The protein is RNA-binding protein Hfq of Delftia acidovorans (strain DSM 14801 / SPH-1).